A 436-amino-acid chain; its full sequence is Carboxypeptidase A5 (436 aa).

The signal sequence occupies residues 1–33 (MQGTPAGGTSPGPSPMDRQTLLVFSLILAAALG). Residues 34-126 (QMNFTGDQVL…EREAMAKSRR (93 aa)) constitute a propeptide, activation peptide. Residues 138 to 431 (SYHTLEEISS…MALRTIMEHT (294 aa)) form the Peptidase M14 domain. H196 and E199 together coordinate Zn(2+). Substrate is bound by residues 196 to 199 (HSRE), R254, and 271 to 272 (NR). C265 and C288 are oxidised to a cystine. H323 contacts Zn(2+). Residues 324–325 (SY) and Y375 contribute to the substrate site. The active-site Proton donor/acceptor is E397.

The protein belongs to the peptidase M14 family. Zn(2+) serves as cofactor.

Its subcellular location is the secreted. The polypeptide is Carboxypeptidase A5 (CPA5) (Macaca fascicularis (Crab-eating macaque)).